The following is a 412-amino-acid chain: F-box/WD repeat-containing protein 4 (412 aa).

The region spanning 25–71 (GPALWRLPEELLLLICSYLDMRALGRLAQVCRWLRRFTSCDLLWRRI) is the F-box domain. 6 WD repeats span residues 154–190 (RPLG…IHKI), 193–229 (TFTV…VWPL), 236–277 (QCLH…IWDL), 283–321 (MTHL…YWDL), 327–366 (KCVM…LWDR), and 373–409 (HAFP…VLDF).

In terms of assembly, part of a SCF (SKP1-cullin-F-box) protein ligase complex. Interacts with POUF51. As to expression, expressed in brain, kidney, lung and liver.

Probably recognizes and binds to some phosphorylated proteins and promotes their ubiquitination and degradation. Likely to be involved in key signaling pathways crucial for normal limb development. May participate in Wnt signaling. In Homo sapiens (Human), this protein is F-box/WD repeat-containing protein 4 (FBXW4).